The sequence spans 143 residues: Transcription antitermination protein NusB (143 aa).

This sequence belongs to the NusB family.

In terms of biological role, involved in transcription antitermination. Required for transcription of ribosomal RNA (rRNA) genes. Binds specifically to the boxA antiterminator sequence of the ribosomal RNA (rrn) operons. The chain is Transcription antitermination protein NusB from Desulfatibacillum aliphaticivorans.